The primary structure comprises 281 residues: Non-selective voltage-gated ion channel 2 (281 aa).

2 residues coordinate ATP: R11 and R19.

This sequence belongs to the eukaryotic mitochondrial porin family.

The protein localises to the mitochondrion outer membrane. Non-selective voltage-gated ion channel that mediates the transport of anions and cations through the mitochondrion outer membrane. The channel adopts an open conformation at low or zero membrane potential and a closed conformation at potentials above 30-40 mV. The open state has a weak anion selectivity whereas the closed state is cation-selective. Does not confer permeability to NADH. In terms of biological role, catalyzes the scrambling of phospholipids across the outer mitochondrial membrane; the mechanism is unrelated to channel activity and is capable of translocating both anionic and zwitterionic phospholipids. This is Non-selective voltage-gated ion channel 2 (POR2) from Saccharomyces cerevisiae (strain ATCC 204508 / S288c) (Baker's yeast).